We begin with the raw amino-acid sequence, 267 residues long: 3-methyl-2-oxobutanoate hydroxymethyltransferase (267 aa).

D46 and D85 together coordinate Mg(2+). Residues 46–47, D85, and K115 contribute to the 3-methyl-2-oxobutanoate site; that span reads DS. Mg(2+) is bound at residue E117. E184 serves as the catalytic Proton acceptor.

Belongs to the PanB family. Homodecamer; pentamer of dimers. The cofactor is Mg(2+).

It localises to the cytoplasm. The catalysed reaction is 3-methyl-2-oxobutanoate + (6R)-5,10-methylene-5,6,7,8-tetrahydrofolate + H2O = 2-dehydropantoate + (6S)-5,6,7,8-tetrahydrofolate. Its pathway is cofactor biosynthesis; (R)-pantothenate biosynthesis; (R)-pantoate from 3-methyl-2-oxobutanoate: step 1/2. Catalyzes the reversible reaction in which hydroxymethyl group from 5,10-methylenetetrahydrofolate is transferred onto alpha-ketoisovalerate to form ketopantoate. The protein is 3-methyl-2-oxobutanoate hydroxymethyltransferase of Geobacter metallireducens (strain ATCC 53774 / DSM 7210 / GS-15).